Consider the following 316-residue polypeptide: Ribosomal RNA small subunit methyltransferase H (316 aa).

Residues 37–39 (GGH), Asp56, Phe83, Asp106, and His113 contribute to the S-adenosyl-L-methionine site. The interval 276–316 (PILPSEEETKENPASRSAKLRVLRKTKSADKKYKKENSKEE) is disordered. Positions 302-316 (KSADKKYKKENSKEE) are enriched in basic and acidic residues.

This sequence belongs to the methyltransferase superfamily. RsmH family.

The protein localises to the cytoplasm. The enzyme catalyses cytidine(1402) in 16S rRNA + S-adenosyl-L-methionine = N(4)-methylcytidine(1402) in 16S rRNA + S-adenosyl-L-homocysteine + H(+). Specifically methylates the N4 position of cytidine in position 1402 (C1402) of 16S rRNA. This is Ribosomal RNA small subunit methyltransferase H from Leptospira borgpetersenii serovar Hardjo-bovis (strain JB197).